The sequence spans 212 residues: uncharacterized protein (212 aa).

S-adenosyl-L-methionine is bound by residues Gly53, Glu74, and Asp97.

It belongs to the methyltransferase superfamily. YrrT family.

In terms of biological role, could be a S-adenosyl-L-methionine-dependent methyltransferase. This is an uncharacterized protein from Bacillus cytotoxicus (strain DSM 22905 / CIP 110041 / 391-98 / NVH 391-98).